We begin with the raw amino-acid sequence, 525 residues long: GMP synthase [glutamine-hydrolyzing] (525 aa).

The Glutamine amidotransferase type-1 domain occupies 9–207 (RILILDFGSQ…VLDICACEAL (199 aa)). Catalysis depends on Cys-86, which acts as the Nucleophile. Catalysis depends on residues His-181 and Glu-183. The region spanning 208–400 (WTPATIIEDA…LGLPYDMLYR (193 aa)) is the GMPS ATP-PPase domain. 235 to 241 (SGGVDSS) is a binding site for ATP.

As to quaternary structure, homodimer.

The catalysed reaction is XMP + L-glutamine + ATP + H2O = GMP + L-glutamate + AMP + diphosphate + 2 H(+). Its pathway is purine metabolism; GMP biosynthesis; GMP from XMP (L-Gln route): step 1/1. In terms of biological role, catalyzes the synthesis of GMP from XMP. The sequence is that of GMP synthase [glutamine-hydrolyzing] from Yersinia enterocolitica serotype O:8 / biotype 1B (strain NCTC 13174 / 8081).